Consider the following 287-residue polypeptide: Acetylglutamate kinase (287 aa).

Residues 70-71, arginine 92, and asparagine 184 each bind substrate; that span reads GG.

Belongs to the acetylglutamate kinase family. ArgB subfamily.

The protein resides in the cytoplasm. The catalysed reaction is N-acetyl-L-glutamate + ATP = N-acetyl-L-glutamyl 5-phosphate + ADP. The protein operates within amino-acid biosynthesis; L-arginine biosynthesis; N(2)-acetyl-L-ornithine from L-glutamate: step 2/4. Its function is as follows. Catalyzes the ATP-dependent phosphorylation of N-acetyl-L-glutamate. The polypeptide is Acetylglutamate kinase (Roseobacter denitrificans (strain ATCC 33942 / OCh 114) (Erythrobacter sp. (strain OCh 114))).